A 952-amino-acid polypeptide reads, in one-letter code: 2-oxoglutarate dehydrogenase E1 component (952 aa).

It belongs to the alpha-ketoglutarate dehydrogenase family. Homodimer. Part of the 2-oxoglutarate dehydrogenase (OGDH) complex composed of E1 (2-oxoglutarate dehydrogenase), E2 (dihydrolipoamide succinyltransferase) and E3 (dihydrolipoamide dehydrogenase); the complex contains multiple copies of the three enzymatic components (E1, E2 and E3). Thiamine diphosphate serves as cofactor.

The enzyme catalyses N(6)-[(R)-lipoyl]-L-lysyl-[protein] + 2-oxoglutarate + H(+) = N(6)-[(R)-S(8)-succinyldihydrolipoyl]-L-lysyl-[protein] + CO2. Its function is as follows. E1 component of the 2-oxoglutarate dehydrogenase (OGDH) complex which catalyzes the decarboxylation of 2-oxoglutarate, the first step in the conversion of 2-oxoglutarate to succinyl-CoA and CO(2). The sequence is that of 2-oxoglutarate dehydrogenase E1 component from Geobacillus sp. (strain WCH70).